A 348-amino-acid polypeptide reads, in one-letter code: RNA 3'-terminal phosphate cyclase (348 aa).

Residues Gln-107 and 290–294 (HLADQ) each bind ATP. The Tele-AMP-histidine intermediate role is filled by His-316.

It belongs to the RNA 3'-terminal cyclase family. Type 1 subfamily.

It localises to the cytoplasm. It carries out the reaction a 3'-end 3'-phospho-ribonucleotide-RNA + ATP = a 3'-end 2',3'-cyclophospho-ribonucleotide-RNA + AMP + diphosphate. Catalyzes the conversion of 3'-phosphate to a 2',3'-cyclic phosphodiester at the end of RNA. The mechanism of action of the enzyme occurs in 3 steps: (A) adenylation of the enzyme by ATP; (B) transfer of adenylate to an RNA-N3'P to produce RNA-N3'PP5'A; (C) and attack of the adjacent 2'-hydroxyl on the 3'-phosphorus in the diester linkage to produce the cyclic end product. The biological role of this enzyme is unknown but it is likely to function in some aspects of cellular RNA processing. In Trichormus variabilis (strain ATCC 29413 / PCC 7937) (Anabaena variabilis), this protein is RNA 3'-terminal phosphate cyclase.